A 153-amino-acid chain; its full sequence is Protein SprT-like (153 aa).

Residues 7–145 (QTLVEKISIV…VCGKCHGRLS (139 aa)) form the SprT-like domain. Residue His-67 participates in Zn(2+) binding. Glu-68 is an active-site residue. Position 71 (His-71) interacts with Zn(2+).

Belongs to the SprT family. Zn(2+) serves as cofactor.

It localises to the cytoplasm. This chain is Protein SprT-like, found in Enterococcus faecalis (strain ATCC 700802 / V583).